The following is a 266-amino-acid chain: MKAVVLTLAVLFLTGSQARHFWQQDEPQSPWDRVKDLATVYVDVVKDGGRDYVAQFEASALGKQLNLKLLDNWDSLSSTVAKLREQIGPVTQEFWDNLEKETEVLRQEMSKDLEEVKKKVQPYLDEFQSKWHEEVELYRQKVAPLGAELREGARQKLQELQEKLSPLAEELRDRARAHVDALRAQLAPYSEQLRERLAARLQALKEGGGAALTEYHAKASEHLSALREKAKPALEDLRQGLLPVLENFRVSLLAAVDEATKKLNSQ.

The N-terminal stretch at 1 to 18 is a signal peptide; that stretch reads MKAVVLTLAVLFLTGSQA. Tandem repeats lie at residues 67-88 and 89-110. Positions 67 to 266 are 10 X approximate tandem repeats; that stretch reads LKLLDNWDSL…DEATKKLNSQ (200 aa). Met-109 carries the methionine sulfoxide modification. One copy of the 3; half-length repeat lies at 111 to 121; the sequence is KDLEEVKKKVQ. 5 consecutive repeat copies span residues 122 to 143, 144 to 165, 166 to 187, 188 to 209, and 210 to 231. A 9; half-length repeat occupies 232–242; it reads PALEDLRQGLL. Repeat 10 spans residues 243 to 266; it reads PVLENFRVSLLAAVDEATKKLNSQ.

The protein belongs to the apolipoprotein A1/A4/E family. As to quaternary structure, homodimer. Interacts with APOA1BP and CLU. Component of a sperm activating protein complex (SPAP), consisting of APOA1, an immunoglobulin heavy chain, an immunoglobulin light chain and albumin. Interacts with NDRG1. Interacts with SCGB3A2. Interacts with NAXE and YJEFN3. Post-translationally, glycosylated. In terms of processing, palmitoylated. Phosphorylation sites are present in the extracellular medium.

The protein localises to the secreted. Participates in the reverse transport of cholesterol from tissues to the liver for excretion by promoting cholesterol efflux from tissues and by acting as a cofactor for the lecithin cholesterol acyltransferase (LCAT). As part of the SPAP complex, activates spermatozoa motility. This Mirounga angustirostris (Northern elephant seal) protein is Apolipoprotein A-I (APOA1).